A 57-amino-acid chain; its full sequence is MLRFVLVYIPVSVVSHTLCISLFIICSTRHTCFSKRYTCLLNICFCFFISSRIRNYF.

3 disulfides stabilise this stretch: cysteine 19–cysteine 39, cysteine 26–cysteine 44, and cysteine 32–cysteine 46.

Belongs to the DEFL family.

This is Defensin-like protein 302 from Arabidopsis thaliana (Mouse-ear cress).